The following is a 286-amino-acid chain: ATP synthase gamma chain (286 aa).

The protein belongs to the ATPase gamma chain family. F-type ATPases have 2 components, CF(1) - the catalytic core - and CF(0) - the membrane proton channel. CF(1) has five subunits: alpha(3), beta(3), gamma(1), delta(1), epsilon(1). CF(0) has three main subunits: a, b and c.

It is found in the cell inner membrane. Functionally, produces ATP from ADP in the presence of a proton gradient across the membrane. The gamma chain is believed to be important in regulating ATPase activity and the flow of protons through the CF(0) complex. In Dechloromonas aromatica (strain RCB), this protein is ATP synthase gamma chain.